The primary structure comprises 827 residues: SH3-containing GRB2-like protein 3-interacting protein 1 (827 aa).

3 disordered regions span residues 1 to 115, 142 to 205, and 223 to 278; these read MMEG…ESHK, SIGN…GPPL, and IWGS…QAAT. Composition is skewed to basic and acidic residues over residues 16 to 32 and 40 to 54; these read RKKEKDTDSTGSPDRDG and PPYHSKAECAREGGK. A phosphoserine mark is found at S78, S104, S105, S107, S149, S151, S156, and S169. 2 positions are modified to phosphothreonine: T180 and T182. Residue S236 is modified to Phosphoserine. Residues 245 to 260 show a composition bias toward pro residues; it reads TGTPPPLPPKAVPATP. A phosphothreonine mark is found at T247 and T259. Phosphoserine occurs at positions 265, 287, 289, 300, 316, and 319. Over residues 265–276 the composition is skewed to polar residues; the sequence is SPLTVATGNDQA. Positions 314–333 are enriched in basic and acidic residues; it reads HFSDASPEHVTPELTPREKV. Residues 314-523 form a disordered region; it reads HFSDASPEHV…LSAATTPTVE (210 aa). T324, T328, and T335 each carry phosphothreonine. Low complexity predominate over residues 336-345; that stretch reads PPAASDIPAD. Positions 346–369 are enriched in pro residues; it reads SPAPGPPGPPGSAGPPGPPGPRHV. S371 is modified (phosphoserine). A compositionally biased stretch (basic and acidic residues) spans 377-392; the sequence is EVQKKVAEQTFIKDDY. S398 carries the post-translational modification Phosphoserine. T409 is modified (phosphothreonine). Low complexity predominate over residues 436–455; that stretch reads ASGASSPARPATPLVPCSST. Residues 456–474 show a composition bias toward pro residues; that stretch reads TPPPPPPRPPSRPKLPPGK. Composition is skewed to low complexity over residues 481 to 491 and 498 to 521; these read SRPFSPPIHSS and PLARAESTSSISSTNSLSAATTPT. S485 bears the Phosphoserine mark. One can recognise an MHD domain in the interval 558–826; the sequence is TLPVAAAFTE…RFAAGKYLAD (269 aa). Interaction with DPF motifs-containing proteins regions lie at residues 560-566, 592-594, 666-669, and 812-817; these read PVAAAFT, SFP, TYYN, and SLIKKR. Residues 648 to 827 are necessary and sufficient to mediate interaction with CANX; that stretch reads MPNLMTHLKK…FAAGKYLADN (180 aa).

Interacts with proteins essential or regulating the formation of functional clathrin-coated pits. Interacts with CANX. Interacts with AP2A1. Interacts with EPS15. Interacts with SH3GL3. Interacts with AMPH. Interacts with ITSN1 (via SH3 domains). Interacts with and REPS1. Specifically expressed in brain (at protein level).

The protein localises to the membrane. The protein resides in the clathrin-coated pit. Functionally, may function in clathrin-mediated endocytosis. Has both a membrane binding/tubulating activity and the ability to recruit proteins essential to the formation of functional clathrin-coated pits. Has a preference for membranes enriched in phosphatidylserine and phosphoinositides and is required for the endocytosis of the transferrin receptor. May also bind tubulin. May play a role in the regulation of energy homeostasis. The protein is SH3-containing GRB2-like protein 3-interacting protein 1 (Sgip1) of Rattus norvegicus (Rat).